The primary structure comprises 290 residues: Arylamine N-acetyltransferase, pineal gland isozyme NAT-10 (290 aa).

The Acyl-thioester intermediate role is filled by C68. Residues H107 and D122 contribute to the active site.

Belongs to the arylamine N-acetyltransferase family.

It carries out the reaction an arylamine + acetyl-CoA = an N-acetylarylamine + CoA. The polypeptide is Arylamine N-acetyltransferase, pineal gland isozyme NAT-10 (Gallus gallus (Chicken)).